Here is a 100-residue protein sequence, read N- to C-terminus: MNLTPREKDKLLISLAAMVARGRLERGCKLNHPEAIALITDYVVEGARDGRAVADLMEAGAHVITADQCMDGIAAMIHDVQVEATFPDGTKLVTVHHPIR.

Belongs to the urease gamma subunit family. As to quaternary structure, heterotrimer of UreA (gamma), UreB (beta) and UreC (alpha) subunits. Three heterotrimers associate to form the active enzyme.

Its subcellular location is the cytoplasm. The enzyme catalyses urea + 2 H2O + H(+) = hydrogencarbonate + 2 NH4(+). The protein operates within nitrogen metabolism; urea degradation; CO(2) and NH(3) from urea (urease route): step 1/1. This Jannaschia sp. (strain CCS1) protein is Urease subunit gamma.